A 277-amino-acid chain; its full sequence is Uridine-cytidine kinase 1 (277 aa).

24–32 is a binding site for ATP; the sequence is GGTASGKST. Substrate is bound by residues D81, Y109, H114, R163, R172, and Q180. Residue D209 participates in ATP binding. A disordered region spans residues 241-277; that stretch reads NHGRSLKRGVAEHGENPSGSSSNLTKRPLLEPSTRPH.

It belongs to the uridine kinase family.

It carries out the reaction uridine + ATP = UMP + ADP + H(+). The catalysed reaction is cytidine + ATP = CMP + ADP + H(+). Its pathway is pyrimidine metabolism; CTP biosynthesis via salvage pathway; CTP from cytidine: step 1/3. It functions in the pathway pyrimidine metabolism; UMP biosynthesis via salvage pathway; UMP from uridine: step 1/1. Phosphorylates uridine and cytidine to uridine monophosphate and cytidine monophosphate. Does not phosphorylate deoxyribonucleosides or purine ribonucleosides. Can use ATP or GTP as a phosphate donor. The chain is Uridine-cytidine kinase 1 (uck1) from Danio rerio (Zebrafish).